Here is a 1534-residue protein sequence, read N- to C-terminus: Dicer-like protein 2 (1534 aa).

Residues 1–10 (MDQDPRKDNP) show a composition bias toward basic and acidic residues. The disordered stretch occupies residues 1 to 36 (MDQDPRKDNPVEMDVDRDDSSQDPDDNESFKSALDE). The span at 11-27 (VEMDVDRDDSSQDPDDN) shows a compositional bias: acidic residues. The Helicase ATP-binding domain maps to 65–249 (TPAALTARAY…IEKLEQVLDA (185 aa)). Position 78 to 85 (78 to 85 (MFEASLKQ)) interacts with ATP. The short motif at 192–195 (DEAH) is the DEAH box element. A Helicase C-terminal domain is found at 404 to 575 (KVQTLLKVLA…NAELELLDDP (172 aa)). The region spanning 597-700 (ARSHLNHFCA…LPTKVSDFLA (104 aa)) is the Dicer dsRNA-binding fold domain. RNase III domains follow at residues 959-1107 (MSLV…MCGG) and 1153-1353 (LEPL…VDSG). E1193, D1339, and E1342 together coordinate Mg(2+). One can recognise a DRBM domain in the interval 1383–1483 (HPNVELQILA…AEKGCLVIKA (101 aa)). Residues 1492 to 1504 (KAAAKEDKGHNTE) show a composition bias toward basic and acidic residues. Residues 1492–1534 (KAAAKEDKGHNTENGDANADNGQSGEKEEVPDCRDADGDTVMN) are disordered. Over residues 1505-1515 (NGDANADNGQS) the composition is skewed to polar residues. Over residues 1516–1528 (GEKEEVPDCRDAD) the composition is skewed to basic and acidic residues.

The protein belongs to the helicase family. Dicer subfamily. Mg(2+) serves as cofactor. It depends on Mn(2+) as a cofactor.

Functionally, dicer-like endonuclease involved in cleaving double-stranded RNA in the RNA interference (RNAi) pathway. Produces 21 to 25 bp dsRNAs (siRNAs) which target the selective destruction of homologous RNAs leading to sequence-specific suppression of gene expression, called post-transcriptional gene silencing (PTGS). Part of a broad host defense response against viral infection and transposons. Controls the expression of the non-LTR retrotransposon Tad in the African strain, Adiomopoume. In Neurospora crassa (strain ATCC 24698 / 74-OR23-1A / CBS 708.71 / DSM 1257 / FGSC 987), this protein is Dicer-like protein 2 (dcl-2).